A 1074-amino-acid polypeptide reads, in one-letter code: DNA annealing helicase and endonuclease ZRANB3 (1074 aa).

The region spanning 46–208 (TFALRRDGRC…FMQIEALFPQ (163 aa)) is the Helicase ATP-binding domain. Residues 46–481 (TFALRRDGRC…GRKEKLQAEE (436 aa)) form a DNA annealing helicase activity region. Residue 59–66 (DEMGLGKT) participates in ATP binding. The short motif at 157 to 160 (DESH) is the DEAH box element. One can recognise a Helicase C-terminal domain in the interval 325 to 481 (AVKDYIKMML…GRKEKLQAEE (157 aa)). The short motif at 519 to 526 (QRDIRSFF) is the PIP-box element. Serine 566 bears the Phosphoserine mark. The RanBP2-type zinc-finger motif lies at 617–647 (FCGEGWQCAFCTYINNSVLPYCEMCENPRGG). Residues 659 to 719 (QNKNKNEKDD…RLTPQPGDEQ (61 aa)) form a disordered region. 2 stretches are compositionally biased toward basic and acidic residues: residues 662-674 (NKNE…DTSK) and 696-711 (AKSK…EDRL). The HNH domain occupies 1006–1046 (PGEGHFWQVDHIKPVSGGGGQCSLDNLQTLCTVCHRERTAQ). Positions 1006-1074 (PGEGHFWQVD…SDITRFLVKK (69 aa)) are endonuclease activity. Positions 1069–1073 (RFLVK) match the APIM motif motif.

This sequence belongs to the SNF2/RAD54 helicase family. In terms of assembly, interacts (via PIP-box and RanBP2-type zinc finger) with PCNA (when PCNA is polyubiquitinated via 'Lys-63'-linked polyubiquitin).

The protein resides in the nucleus. The protein localises to the chromosome. DNA annealing helicase and endonuclease required to maintain genome stability at stalled or collapsed replication forks by facilitating fork restart and limiting inappropriate recombination that could occur during template switching events. Recruited to the sites of stalled DNA replication by polyubiquitinated PCNA and acts as a structure-specific endonuclease that cleaves the replication fork D-loop intermediate, generating an accessible 3'-OH group in the template of the leading strand, which is amenable to extension by DNA polymerase. In addition to endonuclease activity, also catalyzes the fork regression via annealing helicase activity in order to prevent disintegration of the replication fork and the formation of double-strand breaks. The sequence is that of DNA annealing helicase and endonuclease ZRANB3 (ZRANB3) from Bos taurus (Bovine).